The sequence spans 161 residues: MPSFDIVSEVDKQEVRNAIDQVNKEVGTRFDFKGSDARVEQADYTLTVFADDEFKLDQVFDILTTKLAKRNVDVRSLDKGQVEKISGNKVKQLVTVKTGVESELAKKIIRLIKDSKLKVQGSIQGETVRVSGAKRDTLQEAIQLVKKSVTDFPLQFQNFRD.

It belongs to the YajQ family.

Its function is as follows. Nucleotide-binding protein. This chain is Nucleotide-binding protein Nmul_A1044, found in Nitrosospira multiformis (strain ATCC 25196 / NCIMB 11849 / C 71).